We begin with the raw amino-acid sequence, 232 residues long: Small ribosomal subunit protein uS3 (232 aa).

The KH type-2 domain maps to 39–107 (VRQYLTKELK…PAQINIAEVR (69 aa)).

It belongs to the universal ribosomal protein uS3 family. In terms of assembly, part of the 30S ribosomal subunit. Forms a tight complex with proteins S10 and S14.

In terms of biological role, binds the lower part of the 30S subunit head. Binds mRNA in the 70S ribosome, positioning it for translation. In Aliivibrio fischeri (strain MJ11) (Vibrio fischeri), this protein is Small ribosomal subunit protein uS3.